The chain runs to 244 residues: RNA transcription, translation and transport factor protein (244 aa).

Residues Lys-20, Lys-62, and Lys-98 each carry the N6-acetyllysine modification.

This sequence belongs to the RTRAF family. Homodimer. Interacts with FAM98A (via N- and C-terminus). Interacts with NIN; which may prevent phosphorylation of NIN. Interacts with POLR2A. Component of a tRNA-splicing ligase complex.

It is found in the nucleus. Its subcellular location is the cytoplasm. The protein localises to the cytosol. The protein resides in the perinuclear region. It localises to the cytoskeleton. It is found in the microtubule organizing center. Its subcellular location is the centrosome. Functionally, RNA-binding protein involved in modulation of mRNA transcription by Polymerase II. Component of the tRNA-splicing ligase complex and is required for tRNA ligation. May be required for RNA transport. The protein is RNA transcription, translation and transport factor protein of Mus musculus (Mouse).